Consider the following 758-residue polypeptide: Spastin (758 aa).

Residues 1–103 (MVRTKNQSSS…SPRSGHHHSY (103 aa)) are disordered. Residues 1–121 (MVRTKNQSSS…KQNLYVVSFP (121 aa)) lie on the Cytoplasmic side of the membrane. Residues 1–159 (MVRTKNQSSS…VIYRPHRRDC (159 aa)) are interaction with atl. The tract at residues 1 to 210 (MVRTKNQSSS…RPIQPLEMAA (210 aa)) is required for localization to punctate cytoplasmic foci. Low complexity-rich tracts occupy residues 8 to 28 (SSSS…SSGA), 43 to 58 (RSSS…AGGS), 66 to 76 (SSNRRSPGSSP), and 85 to 95 (TDDLTPTTCSP). The segment at residues 122–142 (IIFLFNVLRSLIYQLFCIFRY) is an intramembrane region (helical). Residues 143–758 (LYGASTKVIY…WSQDYGDITI (616 aa)) lie on the Cytoplasmic side of the membrane. Polar residues-rich tracts occupy residues 169 to 180 (SKEQQQSLNHPS) and 189 to 198 (QEQQLSNQPQ). The disordered stretch occupies residues 169-202 (SKEQQQSLNHPSELNREGDGQEQQLSNQPQRFRP). The segment at 208–758 (MAANRPGGGY…WSQDYGDITI (551 aa)) is sufficient for interaction with microtubules and microtubule severing. The 76-residue stretch at 233–308 (HRRAFEYISK…SMARDRLHFL (76 aa)) folds into the MIT domain. The disordered stretch occupies residues 353-454 (RVRSSGYGPK…GPSGSGASTP (102 aa)). 2 stretches are compositionally biased toward polar residues: residues 390-406 (NKSQ…TSVG) and 425-454 (QFSS…ASTP). The residue at position 439 (Thr439) is a Phosphothreonine. The tract at residues 443-455 (NNGPSGSGASTPV) is required for interaction with microtubules. Residue 523-530 (GPPGNGKT) coordinates ATP.

Belongs to the AAA ATPase family. Spastin subfamily. As to quaternary structure, homohexamer. The homohexamer is stabilized by ATP-binding. The homohexamer may adopt a ring conformation through which microtubules pass prior to being severed. Interacts with microtubules. Interacts with atl; may be involved in microtubule dynamics.

The protein resides in the membrane. It localises to the cytoplasm. The protein localises to the cytoskeleton. Its subcellular location is the microtubule organizing center. It is found in the centrosome. The protein resides in the chromosome. It localises to the lipid droplet. It carries out the reaction n ATP + n H2O + a microtubule = n ADP + n phosphate + (n+1) alpha/beta tubulin heterodimers.. Its function is as follows. ATP-dependent microtubule severing protein. Stimulates microtubule minus-end depolymerization and poleward microtubule flux in the mitotic spindle. Regulates microtubule stability in the neuromuscular junction synapse. Involved in lipid metabolism by regulating the size and distribution of lipid droplets. Involved in axon regeneration by regulating microtubule severing. The chain is Spastin from Drosophila melanogaster (Fruit fly).